A 385-amino-acid polypeptide reads, in one-letter code: MGNWLLPESLADVLPAEARRIEELRRELLDLYRTYGFELVAPPLVEYIDSLLSGTGTDLNLRTCKLVDQLSGRTLGVRADMTPQVTRIDAHLLNRAGVTRLCYCGTVLHARPADLLSSRELLQIGAEIYGHAGFEADLEILSLVLDTVAAAGLRQPRLDLCHPGVVRAILDADPAAAAYAEDIVLLLREKDVPGLAELARRDGGIRADTAAALQRLPGLYGGPDVLQQARHDLPLLPGVAAALDALQAIIDAMPDVTLGVDLADIGGYGYHSGVTFALYAEGWHDALVSGGRYDDVSRAFGRARPATGFSLDLRKLARGLPPAGRARAVRAPWGQDAALAAAVRQLRRAGEIVVQALPGHQQSQDEFICDRELVLQDGAWTLRTL.

The protein belongs to the class-II aminoacyl-tRNA synthetase family. HisZ subfamily. Heteromultimer composed of HisG and HisZ subunits.

It is found in the cytoplasm. It participates in amino-acid biosynthesis; L-histidine biosynthesis; L-histidine from 5-phospho-alpha-D-ribose 1-diphosphate: step 1/9. Functionally, required for the first step of histidine biosynthesis. May allow the feedback regulation of ATP phosphoribosyltransferase activity by histidine. The polypeptide is ATP phosphoribosyltransferase regulatory subunit (Bordetella petrii (strain ATCC BAA-461 / DSM 12804 / CCUG 43448)).